A 573-amino-acid polypeptide reads, in one-letter code: ATP-dependent RNA helicase RhlB (573 aa).

The short motif at 9–37 (VTFSSFDLHPALIAGLESAGFTRCTPIQA) is the Q motif element. The region spanning 40-220 (LPVALPGGDV…YEHMNEPEKL (181 aa)) is the Helicase ATP-binding domain. Position 53–60 (53–60 (AQTGTGKT)) interacts with ATP. Residues 166-169 (DEAD) carry the DEAD box motif. The Helicase C-terminal domain maps to 231–393 (RVRQRIYFPS…PVTSELLTPL (163 aa)). Residues 391-560 (TPLPRAPRVP…KPSGSPSLLS (170 aa)) form a disordered region. Residues 402–411 (EGEEADDDAG) are compositionally biased toward acidic residues. The segment covering 419-432 (REAREQRAAEEQRR) has biased composition (basic and acidic residues). The span at 435-450 (GRSGSGGSRSGSGGGG) shows a compositional bias: gly residues. Over residues 451–462 (GRREGAGADGKP) the composition is skewed to basic and acidic residues. Positions 484 to 499 (PVVAAAAGQAPSAGVA) are enriched in low complexity. The span at 505-514 (PRKRRRRRNG) shows a compositional bias: basic residues. The span at 541-560 (VVAKPVRAAAKPSGSPSLLS) shows a compositional bias: low complexity.

It belongs to the DEAD box helicase family. RhlB subfamily. As to quaternary structure, component of the RNA degradosome, which is a multiprotein complex involved in RNA processing and mRNA degradation.

The protein resides in the cytoplasm. It catalyses the reaction ATP + H2O = ADP + phosphate + H(+). DEAD-box RNA helicase involved in RNA degradation. Has RNA-dependent ATPase activity and unwinds double-stranded RNA. This Xanthomonas euvesicatoria pv. vesicatoria (strain 85-10) (Xanthomonas campestris pv. vesicatoria) protein is ATP-dependent RNA helicase RhlB.